We begin with the raw amino-acid sequence, 141 residues long: Hemoglobin subunit alpha (141 aa).

In terms of domain architecture, Globin spans Val-1–Arg-141. The residue at position 3 (Ser-3) is a Phosphoserine. Lys-7 carries the N6-succinyllysine modification. Phosphothreonine is present on Thr-8. An N6-succinyllysine modification is found at Lys-11. Lys-16 is subject to N6-acetyllysine; alternate. N6-succinyllysine; alternate is present on Lys-16. Residue Tyr-24 is modified to Phosphotyrosine. Ser-35 bears the Phosphoserine mark. The residue at position 40 (Lys-40) is an N6-succinyllysine. Phosphoserine is present on Ser-49. His-58 is an O2 binding site. Residue His-87 coordinates heme b. The residue at position 102 (Ser-102) is a Phosphoserine. Thr-108 carries the phosphothreonine modification. Residues Ser-124 and Ser-131 each carry the phosphoserine modification. Phosphothreonine occurs at positions 134 and 137. Ser-138 carries the phosphoserine modification.

This sequence belongs to the globin family. In terms of assembly, heterotetramer of two alpha chains and two beta chains. Red blood cells.

Involved in oxygen transport from the lung to the various peripheral tissues. The protein is Hemoglobin subunit alpha of Otospermophilus beecheyi (California ground squirrel).